The sequence spans 204 residues: Recombination protein RecR (204 aa).

A C4-type zinc finger spans residues C63–C78. A Toprim domain is found at T86–P181.

The protein belongs to the RecR family.

In terms of biological role, may play a role in DNA repair. It seems to be involved in an RecBC-independent recombinational process of DNA repair. It may act with RecF and RecO. The polypeptide is Recombination protein RecR (Chloroflexus aurantiacus (strain ATCC 29366 / DSM 635 / J-10-fl)).